Here is a 782-residue protein sequence, read N- to C-terminus: E3 ubiquitin-protein ligase SopA (782 aa).

Positions 137–171 (VSVSANNRPTVSEGRTPPVSPSLSLQATSSPSSPA) are disordered. A compositionally biased stretch (low complexity) spans 157–171 (PSLSLQATSSPSSPA). Catalysis depends on Cys-753, which acts as the Glycyl thioester intermediate.

It belongs to the SopA E3 ligase family. Ubiquitinated in the presence of host E1 ubiquitin-activating enzyme, E2 ubiquitin-conjugating enzyme and ubiquitin.

The protein resides in the secreted. It is found in the host cell. The enzyme catalyses S-ubiquitinyl-[E2 ubiquitin-conjugating enzyme]-L-cysteine + [acceptor protein]-L-lysine = [E2 ubiquitin-conjugating enzyme]-L-cysteine + N(6)-ubiquitinyl-[acceptor protein]-L-lysine.. Functionally, effector proteins function to alter host cell physiology and promote bacterial survival in host tissues. This protein is an E3 ubiquitin ligase that interferes with host's ubiquitination pathway. The sequence is that of E3 ubiquitin-protein ligase SopA (sopA) from Salmonella dublin (strain CT_02021853).